Here is a 287-residue protein sequence, read N- to C-terminus: Probable ribosomal RNA small subunit methyltransferase A (287 aa).

6 residues coordinate S-adenosyl-L-methionine: H29, L31, G56, E77, D102, and N117.

Belongs to the class I-like SAM-binding methyltransferase superfamily. rRNA adenine N(6)-methyltransferase family. RsmA subfamily.

The protein resides in the cytoplasm. In terms of biological role, specifically dimethylates two adjacent adenosines in the loop of a conserved hairpin near the 3'-end of 16S rRNA in the 30S particle. May play a critical role in biogenesis of 30S subunits. The chain is Probable ribosomal RNA small subunit methyltransferase A from Methanosarcina barkeri (strain Fusaro / DSM 804).